We begin with the raw amino-acid sequence, 353 residues long: uncharacterized protein (353 aa).

A signal peptide spans 1–28 (MHLTIMRRFAVLLLLAIFLGGCSGSNGA).

This is an uncharacterized protein from Archaeoglobus fulgidus (strain ATCC 49558 / DSM 4304 / JCM 9628 / NBRC 100126 / VC-16).